The primary structure comprises 325 residues: Putative [LysW]-lysine/[LysW]-ornithine hydrolase (325 aa).

His66 contributes to the Zn(2+) binding site. The active site involves Asp68. Residue Asp90 participates in Zn(2+) binding. The active-site Proton acceptor is Glu117. Zn(2+)-binding residues include Glu118, Glu139, and His297.

Belongs to the peptidase M20A family. LysK subfamily. Requires Zn(2+) as cofactor. It depends on Co(2+) as a cofactor.

Its subcellular location is the cytoplasm. It catalyses the reaction [amino-group carrier protein]-C-terminal-gamma-(L-lysyl)-L-glutamate + H2O = [amino-group carrier protein]-C-terminal-L-glutamate + L-lysine. The catalysed reaction is [amino-group carrier protein]-C-terminal-gamma-(L-ornithyl)-L-glutamate + H2O = [amino-group carrier protein]-C-terminal-L-glutamate + L-ornithine. Its pathway is amino-acid biosynthesis; L-lysine biosynthesis via AAA pathway; L-lysine from L-alpha-aminoadipate (Thermus route): step 5/5. It participates in amino-acid biosynthesis; L-arginine biosynthesis. Its function is as follows. Catalyzes the release of L-lysine from [LysW]-gamma-L-lysine and the release of L-ornithine from [LysW]-L-ornithine. The protein is Putative [LysW]-lysine/[LysW]-ornithine hydrolase of Pyrococcus horikoshii (strain ATCC 700860 / DSM 12428 / JCM 9974 / NBRC 100139 / OT-3).